Here is a 910-residue protein sequence, read N- to C-terminus: Periodic tryptophan protein 2 homolog (910 aa).

WD repeat units lie at residues 12-50, 53-92, 94-134, 144-183, 188-227, 271-310, 313-355, 358-397, 400-439, 443-485, 486-523, 525-563, 586-625, and 688-728; these read GTVY…SKTL, DCNY…KIYT, RSNK…KVYN, LSSD…NLFI, SHKG…GELV, GKSV…LVHN, VSEM…YVMK, AHSL…CTVT, EHTS…NFRT, PEPT…DILS, GHES…AETV, VSHE…NLGS, AKTK…ILKK, and RPEV…DPFQ. A disordered region spans residues 867–910; it reads SKKSVKKEEEEEEDVSDESDDEDIEDESAGSDDEDSDDSVEIIE. Over residues 875–910 the composition is skewed to acidic residues; that stretch reads EEEEEDVSDESDDEDIEDESAGSDDEDSDDSVEIIE.

Belongs to the WD repeat PWP2 family.

The sequence is that of Periodic tryptophan protein 2 homolog from Caenorhabditis elegans.